Here is a 708-residue protein sequence, read N- to C-terminus: Leucine-rich repeat neuronal protein 3 (708 aa).

The N-terminal stretch at 1–22 is a signal peptide; sequence MKDMPLRIHVLLGLAITTLVQA. Residues 23 to 69 form the LRRNT domain; the sequence is VDKKVDCPRLCTCEIRPWFTPRSIYMEASTVDCNDLGLLTFPARLPA. Residues 23 to 628 are Extracellular-facing; that stretch reads VDKKVDCPRL…KEYEKNNTTT (606 aa). 12 LRR repeats span residues 70–91, 93–114, 117–138, 141–162, 165–186, 189–210, 213–234, 237–258, 261–282, 285–304, 310–332, and 335–358; these read NTQI…TDFP, NLTG…NVKK, QLLS…CLSE, NLQE…AFIG, NLLR…WFDA, NLEI…NFKP, NLRS…ALVG, NLES…ALQK, NLKF…DFSN, HLKE…DSLA, DLRK…AFFR, and KLES…ESLP. N93 and N103 each carry an N-linked (GlcNAc...) asparagine glycan. An N-linked (GlcNAc...) asparagine glycan is attached at N223. The 54-residue stretch at 368 to 421 folds into the LRRCT domain; it reads NPIRCDCVIRWMNMNKTNIRFMEPDSLFCVDPPEFQGQNVRQVHFRDMMEICLP. The N-linked (GlcNAc...) asparagine glycan is linked to N382. One can recognise an Ig-like C2-type domain in the interval 421 to 514; that stretch reads PLIAPESFPS…DLKSVMIKVD (94 aa). An intrachain disulfide couples C444 to C496. Residues N522, N579, N608, N624, and N625 are each glycosylated (N-linked (GlcNAc...) asparagine). The Fibronectin type-III domain occupies 523 to 617; sequence GSLNIKIRDI…NVTTKGLHPD (95 aa). Residues 629–649 traverse the membrane as a helical segment; the sequence is LMACLGGLLGIIGVICLISCL. The Cytoplasmic segment spans residues 650–708; that stretch reads SPEMNCDGGHSYVRNYLQKPTFALGELYPPLINLWEAGKEKSTSLKVKATVIGLPTNMS.

The protein resides in the membrane. The chain is Leucine-rich repeat neuronal protein 3 (LRRN3) from Homo sapiens (Human).